The sequence spans 149 residues: Transcriptional regulator MraZ (149 aa).

2 consecutive SpoVT-AbrB domains span residues 6 to 52 (HAHR…TPPD) and 81 to 124 (SEEV…DKRE).

This sequence belongs to the MraZ family. As to quaternary structure, forms oligomers.

It is found in the cytoplasm. Its subcellular location is the nucleoid. The protein is Transcriptional regulator MraZ of Maridesulfovibrio salexigens (strain ATCC 14822 / DSM 2638 / NCIMB 8403 / VKM B-1763) (Desulfovibrio salexigens).